A 231-amino-acid chain; its full sequence is ATP-dependent dethiobiotin synthetase BioD 2 (231 aa).

Serine 13–valine 18 serves as a coordination point for ATP. Residue threonine 17 coordinates Mg(2+). Lysine 38 is an active-site residue. ATP is bound by residues aspartate 55, glutamate 112–glycine 115, asparagine 172–arginine 173, proline 201–leucine 203, and glutamine 208. Positions 55 and 112 each coordinate Mg(2+).

The protein belongs to the dethiobiotin synthetase family. As to quaternary structure, homodimer. Mg(2+) is required as a cofactor.

It localises to the cytoplasm. The catalysed reaction is (7R,8S)-7,8-diammoniononanoate + CO2 + ATP = (4R,5S)-dethiobiotin + ADP + phosphate + 3 H(+). Its pathway is cofactor biosynthesis; biotin biosynthesis; biotin from 7,8-diaminononanoate: step 1/2. Its function is as follows. Catalyzes a mechanistically unusual reaction, the ATP-dependent insertion of CO2 between the N7 and N8 nitrogen atoms of 7,8-diaminopelargonic acid (DAPA, also called 7,8-diammoniononanoate) to form a ureido ring. In Salmonella typhi, this protein is ATP-dependent dethiobiotin synthetase BioD 2.